The following is a 420-amino-acid chain: Exodeoxyribonuclease 7 large subunit (420 aa).

It belongs to the XseA family. In terms of assembly, heterooligomer composed of large and small subunits.

It localises to the cytoplasm. The catalysed reaction is Exonucleolytic cleavage in either 5'- to 3'- or 3'- to 5'-direction to yield nucleoside 5'-phosphates.. Functionally, bidirectionally degrades single-stranded DNA into large acid-insoluble oligonucleotides, which are then degraded further into small acid-soluble oligonucleotides. In Helicobacter acinonychis (strain Sheeba), this protein is Exodeoxyribonuclease 7 large subunit.